The chain runs to 227 residues: Homeobox protein HD-10 (227 aa).

Residues Phe-30–Thr-89 constitute a DNA-binding region (homeobox). The segment at Leu-88–Lys-115 is disordered. Positions Lys-92–Thr-102 are enriched in polar residues.

The protein localises to the nucleus. The polypeptide is Homeobox protein HD-10 (HD-10) (Encephalitozoon cuniculi (strain GB-M1) (Microsporidian parasite)).